We begin with the raw amino-acid sequence, 275 residues long: 4,5-DOPA dioxygenase extradiol 1 (275 aa).

Residues His-22, His-60, His-182, and His-236 each coordinate Zn(2+).

This sequence belongs to the DODA-type extradiol aromatic ring-opening dioxygenase family. Requires Zn(2+) as cofactor.

The enzyme catalyses L-dopa + O2 = 4-(L-alanin-3-yl)-2-hydroxy-cis,cis-muconate 6-semialdehyde + H(+). It participates in pigment biosynthesis; betalain biosynthesis. Opens the cyclic ring of dihydroxy-phenylalanine (DOPA) between carbons 4 and 5, thus producing an unstable seco-DOPA that rearranges nonenzymatically to betalamic acid. The protein is 4,5-DOPA dioxygenase extradiol 1 of Beta vulgaris (Sugar beet).